Reading from the N-terminus, the 361-residue chain is Serpentine receptor class epsilon-32 (361 aa).

The next 7 membrane-spanning stretches (helical) occupy residues 34–54, 66–86, 124–144, 168–188, 195–215, 256–276, and 286–306; these read IIEL…LYVM, ILYI…LITI, LLIF…YGIL, IPIA…LSVL, FLSH…YLFI, LVFV…ALAF, and FVEN…MLTI.

This sequence belongs to the nematode receptor-like protein sre family.

The protein resides in the membrane. This is Serpentine receptor class epsilon-32 (sre-32) from Caenorhabditis elegans.